A 383-amino-acid polypeptide reads, in one-letter code: Homeobox protein knotted-1-like 5 (383 aa).

Disordered regions lie at residues Met-1–Glu-35 and Thr-52–Asn-73. Residues Glu-281–Ile-301 enclose the ELK domain. A DNA-binding region (homeobox; TALE-type) is located at residues Met-302 to Asn-365. The tract at residues Asn-361–Ser-383 is disordered. The segment covering Trp-362–Thr-373 has biased composition (low complexity). Over residues Lys-374–Ser-383 the composition is skewed to basic residues.

The protein belongs to the TALE/KNOX homeobox family. As to quaternary structure, may form heterodimeric complex with the TALE/BELL protein BEL1, BLH1 and BLH2. Interacts with OFP1, OFP2, OFP3 and OFP4.

It localises to the nucleus. The polypeptide is Homeobox protein knotted-1-like 5 (KNAT5) (Arabidopsis thaliana (Mouse-ear cress)).